We begin with the raw amino-acid sequence, 396 residues long: Vitamin K-dependent protein Z (396 aa).

The 46-residue stretch at 1 to 46 (AGSYLLEELFEGHLEKECWEEICVYEEAREVFEDDETTDEFWRTYM) folds into the Gla domain. 4-carboxyglutamate is present on residues Glu7, Glu8, Glu11, Glu15, Glu17, Glu20, Glu21, Glu26, Glu27, Glu30, Glu33, Glu36, and Glu40. A disulfide bridge connects residues Cys18 and Cys23. EGF-like domains lie at 47 to 83 (GGSP…PNCA) and 85 to 126 (AESE…RSCL). Intrachain disulfides connect Cys51–Cys62, Cys56–Cys71, Cys73–Cys82, Cys89–Cys101, Cys97–Cys110, Cys112–Cys125, and Cys169–Cys185. Residue Ser53 is glycosylated (O-linked (Glc...) serine). Residue Asn59 is glycosylated (N-linked (GlcNAc...) asparagine). Asp64 bears the (3R)-3-hydroxyaspartate mark. The Peptidase S1 domain occupies 135–357 (TLGPECCQRP…YALWLRQVTQ (223 aa)). N-linked (GlcNAc...) asparagine glycans are attached at residues Asn191 and Asn289. Cys284 and Cys298 form a disulfide bridge. The disordered stretch occupies residues 356–396 (TQQPSRASPRGDRGQGRDGEPVPGDRGGRWAPTALPPGPLV). Positions 364 to 375 (PRGDRGQGRDGE) are enriched in basic and acidic residues. O-linked (GalNAc...) threonine glycosylation occurs at Thr388.

This sequence belongs to the peptidase S1 family. Post-translationally, the iron and 2-oxoglutarate dependent 3-hydroxylation of aspartate and asparagine is (R) stereospecific within EGF domains. As to expression, plasma.

The protein resides in the secreted. In terms of biological role, inhibits activity of the coagulation protease factor Xa in the presence of SERPINA10, calcium and phospholipids. Appears to assist hemostasis by binding thrombin and promoting its association with phospholipid vesicles. The chain is Vitamin K-dependent protein Z (PROZ) from Bos taurus (Bovine).